The following is a 565-amino-acid chain: Potassium-transporting ATPase potassium-binding subunit (565 aa).

The next 12 helical transmembrane spans lie at 6–26 (LMLLGLLILLLLILAPLLGSL), 63–83 (LLAILAFNLLGIVLLFALLMA), 132–152 (GLGVQNFLSAASGIAVLFALI), 175–195 (LYVLLPLSLLLSLLFVSQGVI), 250–270 (LSNLLQMVAIFLLPTALCFAF), 283–303 (LLWTMSLIFIVAAGCVMYAEL), 327–347 (FGILASALYAVVTTAASCGAV), 354–374 (FTALGGMVPMWLMQIGEVVFG), 379–399 (GLYGMLLFVLLTVFIAGLMIG), 418–438 (ALAILIPPALVLTGSAIALLC), 483–503 (LLLALVMLIGRFGVIIPVMAI), and 524–544 (GALFVSLLIGTILLVGALTFI).

This sequence belongs to the KdpA family. The system is composed of three essential subunits: KdpA, KdpB and KdpC.

It localises to the cell inner membrane. Its function is as follows. Part of the high-affinity ATP-driven potassium transport (or Kdp) system, which catalyzes the hydrolysis of ATP coupled with the electrogenic transport of potassium into the cytoplasm. This subunit binds the periplasmic potassium ions and delivers the ions to the membrane domain of KdpB through an intramembrane tunnel. The polypeptide is Potassium-transporting ATPase potassium-binding subunit (Edwardsiella ictaluri (strain 93-146)).